Consider the following 195-residue polypeptide: MSEIKLIVGLANPGAEYAHTRHNAGAWYVLELARICGVTLVADSKYFGLTARAVLHGKDVRLLIPTTYMNLSGKAVGALANFFRITPEEILVAHDELDLPPGVAKFKLGGGHGGHNGLKDIIAKLANDKNFYRLRLGIGHPGDKNQVSGYVLGKAPAKEQELIDAAIDEAVRSTEILFKQDMVKAMNRLHSFKAE.

Position 17 (tyrosine 17) interacts with tRNA. Histidine 22 acts as the Proton acceptor in catalysis. TRNA contacts are provided by tyrosine 68, asparagine 70, and asparagine 116.

This sequence belongs to the PTH family. As to quaternary structure, monomer.

Its subcellular location is the cytoplasm. It carries out the reaction an N-acyl-L-alpha-aminoacyl-tRNA + H2O = an N-acyl-L-amino acid + a tRNA + H(+). In terms of biological role, hydrolyzes ribosome-free peptidyl-tRNAs (with 1 or more amino acids incorporated), which drop off the ribosome during protein synthesis, or as a result of ribosome stalling. Catalyzes the release of premature peptidyl moieties from peptidyl-tRNA molecules trapped in stalled 50S ribosomal subunits, and thus maintains levels of free tRNAs and 50S ribosomes. The chain is Peptidyl-tRNA hydrolase from Shewanella baltica (strain OS155 / ATCC BAA-1091).